Reading from the N-terminus, the 359-residue chain is DNA integrity scanning protein DisA (359 aa).

In terms of domain architecture, DAC spans 7 to 145; sequence DDIFRATLAA…AGRRYVLDGA (139 aa). ATP-binding positions include glycine 74, leucine 92, and 105-109; that span reads TRHRT.

This sequence belongs to the DisA family. In terms of assembly, homooctamer. Mg(2+) serves as cofactor.

The enzyme catalyses 2 ATP = 3',3'-c-di-AMP + 2 diphosphate. Functionally, participates in a DNA-damage check-point that is active prior to asymmetric division when DNA is damaged. DisA forms globular foci that rapidly scan along the chromosomes during sporulation, searching for lesions. When a lesion is present, DisA pauses at the lesion site. This triggers a cellular response that culminates in a temporary block in sporulation initiation. Also has diadenylate cyclase activity, catalyzing the condensation of 2 ATP molecules into cyclic di-AMP (c-di-AMP). c-di-AMP acts as a signaling molecule that couples DNA integrity with progression of sporulation. The rise in c-di-AMP level generated by DisA while scanning the chromosome, operates as a positive signal that advances sporulation; upon encountering a lesion, the DisA focus arrests at the damaged site and halts c-di-AMP synthesis. This Parafrankia sp. (strain EAN1pec) protein is DNA integrity scanning protein DisA.